The sequence spans 196 residues: Putative tyrosine-protein phosphatase OCA1 (196 aa).

In terms of domain architecture, Tyrosine-protein phosphatase spans 33 to 192; the sequence is NFCPVEKQLY…SVQIDPTKMP (160 aa). Residue C130 is the Phosphocysteine intermediate of the active site.

Belongs to the protein-tyrosine phosphatase family.

Its subcellular location is the cytoplasm. The catalysed reaction is O-phospho-L-tyrosyl-[protein] + H2O = L-tyrosyl-[protein] + phosphate. Its function is as follows. Putative tyrosine-protein phosphatase required for protection against superoxide stress. In Debaryomyces hansenii (strain ATCC 36239 / CBS 767 / BCRC 21394 / JCM 1990 / NBRC 0083 / IGC 2968) (Yeast), this protein is Putative tyrosine-protein phosphatase OCA1 (OCA1).